Consider the following 118-residue polypeptide: UPF0295 protein GWCH70_0499 (118 aa).

Transmembrane regions (helical) follow at residues 12–32 and 42–62; these read IRTF…IGIF and LFMI…FWIG.

This sequence belongs to the UPF0295 family.

It localises to the cell membrane. This is UPF0295 protein GWCH70_0499 from Geobacillus sp. (strain WCH70).